The primary structure comprises 307 residues: Transaldolase (307 aa).

Catalysis depends on Lys125, which acts as the Schiff-base intermediate with substrate.

It belongs to the transaldolase family. Type 1 subfamily. As to quaternary structure, homodimer.

Its subcellular location is the cytoplasm. The catalysed reaction is D-sedoheptulose 7-phosphate + D-glyceraldehyde 3-phosphate = D-erythrose 4-phosphate + beta-D-fructose 6-phosphate. It functions in the pathway carbohydrate degradation; pentose phosphate pathway; D-glyceraldehyde 3-phosphate and beta-D-fructose 6-phosphate from D-ribose 5-phosphate and D-xylulose 5-phosphate (non-oxidative stage): step 2/3. Its function is as follows. Transaldolase is important for the balance of metabolites in the pentose-phosphate pathway. In Pseudomonas aeruginosa (strain LESB58), this protein is Transaldolase.